A 194-amino-acid polypeptide reads, in one-letter code: Ras-like protein rasS (194 aa).

Residue 10–17 (GPGGVGKS) participates in GTP binding. The Effector region signature appears at 32 to 40 (YDPTLEDSY). GTP is bound by residues 57–61 (DTAGQ) and 116–119 (NKCD). The interval 168-194 (RQSNQHSNSQEQNTDQPIKKKKSCNLL) is disordered. A compositionally biased stretch (low complexity) spans 169 to 180 (QSNQHSNSQEQN). Cysteine 191 is modified (cysteine methyl ester). Cysteine 191 carries S-geranylgeranyl cysteine lipidation. A propeptide spans 192-194 (NLL) (removed in mature form).

The protein belongs to the small GTPase superfamily. Ras family.

Its subcellular location is the cell membrane. The enzyme catalyses GTP + H2O = GDP + phosphate + H(+). Ras proteins bind GDP/GTP and possess intrinsic GTPase activity. This Dictyostelium discoideum (Social amoeba) protein is Ras-like protein rasS (rasS).